The chain runs to 727 residues: Plakophilin-1 (727 aa).

The segment at 1 to 235 is required for binding to single stranded DNA; the sequence is MNHSPLKTAL…SFSHSRASSK (235 aa). Residues 1–287 are required for interaction with EIF4A1; the sequence is MNHSPLKTAL…ESAKQQVYQL (287 aa). S4 is modified (phosphoserine). The disordered stretch occupies residues 48-69; the sequence is TVKRQKSKSSQSSTLSHSNRGS. 2 phosphorylation in this region is required for cytoplasmic localization and protein stabilization regions span residues 54–69 and 117–192; these read SKSSQSSTLSHSNRGS and RFSS…STCS. Phosphoserine occurs at positions 119, 120, 122, and 143. Residues 161–270 form a required for WNT-mediated nuclear localization region; the sequence is YCDPRGTLRK…KCQAIGAYYI (110 aa). ARM repeat units lie at residues 244 to 275, 276 to 317, 318 to 360, 361 to 412, 413 to 443, 505 to 536, 537 to 583, 584 to 629, and 630 to 693; these read SGLTIPKAVQYLSSQDEKCQAIGAYYIQHTCF, QDES…NLVF, RSTT…NLSS, TDEL…GCLR, NLSSADVGRQTMRNYTGLIDSLMAYVQNCVA, NYDCPLPEEEPNPKGSSWLYHSDAVRTYLNLM, GKSK…IARL, LQSG…SHTG, and NTSN…DMWS.

Belongs to the beta-catenin family. Part of a complex that contains DSG3, PKP1, YAP1 and YWHAG; the complex is required for localization of DSG3 and YAP1 to the cell membrane in keratinocytes. Interacts (via N-terminus) with KRT5/CK5, KRT8/CK8 (via rod domain), KRT15/CK15 and KRT18/CK18 (via rod domain) as part of intermediate filaments. Interacts with VIM (via rod domain). Interacts with DSP. Interacts with DES. Interacts with FXR1; the interaction may facilitate the binding of PKP1 to PKP2, PKP3 and DSP mRNA. Interacts (via N-terminus) with EIF4A1; the interaction promotes EIF4A1 recruitment to the cap-dependent translation complex and EIF4A1 ATPase activity. Interacts with TJP1/ZO-1; the interaction facilitates TJP1/ZO-1 localization to the plasma membrane. Interacts (when phosphorylated) with YWHAG; the interaction results in translocation of PKP1 to the cytoplasm and loss of intercellular adhesion in keratinocytes. Post-translationally, phosphorylated by AKT2; required for interaction with YWHAG and subsequent localization away from desmosomes to the cytoplasm. Phosphorylation of Ser-119 by AKT2 promotes PKP1-driven cap-dependent mRNA translation and decreases intercellular adhesion, phosphorylation is promoted by insulin. Phosphorylation by RIPK4 at the N-terminus is required for its role in differentiation of keratinocytes and DSG1 localization at cell junctions.

It localises to the nucleus. The protein localises to the cytoplasm. Its subcellular location is the perinuclear region. It is found in the cell junction. The protein resides in the desmosome. It localises to the cell membrane. The protein localises to the stress granule. In terms of biological role, a component of desmosome cell-cell junctions which are required for positive regulation of cellular adhesion. Plays a role in desmosome protein expression regulation and localization to the desmosomal plaque, thereby maintaining cell sheet integrity and anchorage of desmosomes to intermediate filaments. Required for localization of DSG3 and YAP1 to the cell membrane in keratinocytes in response to mechanical strain, via the formation of an interaction complex composed of DSG3, YAP1, PKP1 and YWHAG. Positively regulates differentiation of keratinocytes, potentially via promoting localization of DSG1 at desmosome cell junctions. Required for calcium-independent development and maturation of desmosome plaques specifically at lateral cell-cell contacts in differentiating keratinocytes. Plays a role in the maintenance of DSG3 protein abundance, DSG3 clustering and localization of these clusters to the cell membrane in keratinocytes. May also promote keratinocyte proliferation and morphogenesis during postnatal development. Required for tight junction inside-out transepidermal barrier function of the skin. Promotes Wnt-mediated proliferation and differentiation of ameloblasts, via facilitating TJP1/ZO-1 localization to tight junctions. Binds single-stranded DNA (ssDNA), and may thereby play a role in sensing DNA damage and promoting cell survival. Positively regulates cap-dependent translation and as a result cell proliferation, via recruitment of EIF4A1 to the initiation complex and promotion of EIF4A1 ATPase activity. Regulates the mRNA stability and protein abundance of desmosome components PKP2, PKP3, DSC2 and DSP, potentially via its interaction with FXR1. May facilitate the formation of intermediate filaments. The sequence is that of Plakophilin-1 (PKP1) from Bos taurus (Bovine).